A 184-amino-acid polypeptide reads, in one-letter code: Potassium-transporting ATPase KdpC subunit (184 aa).

The helical transmembrane segment at leucine 10–alanine 30 threads the bilayer.

Belongs to the KdpC family. As to quaternary structure, the system is composed of three essential subunits: KdpA, KdpB and KdpC.

Its subcellular location is the cell inner membrane. In terms of biological role, part of the high-affinity ATP-driven potassium transport (or Kdp) system, which catalyzes the hydrolysis of ATP coupled with the electrogenic transport of potassium into the cytoplasm. This subunit acts as a catalytic chaperone that increases the ATP-binding affinity of the ATP-hydrolyzing subunit KdpB by the formation of a transient KdpB/KdpC/ATP ternary complex. This Flavobacterium psychrophilum (strain ATCC 49511 / DSM 21280 / CIP 103535 / JIP02/86) protein is Potassium-transporting ATPase KdpC subunit.